A 229-amino-acid chain; its full sequence is Putative N-acetylmannosamine-6-phosphate 2-epimerase (229 aa).

It belongs to the NanE family.

It carries out the reaction an N-acyl-D-glucosamine 6-phosphate = an N-acyl-D-mannosamine 6-phosphate. It participates in amino-sugar metabolism; N-acetylneuraminate degradation; D-fructose 6-phosphate from N-acetylneuraminate: step 3/5. Functionally, converts N-acetylmannosamine-6-phosphate (ManNAc-6-P) to N-acetylglucosamine-6-phosphate (GlcNAc-6-P). This is Putative N-acetylmannosamine-6-phosphate 2-epimerase from Escherichia coli O8 (strain IAI1).